The chain runs to 239 residues: Orotidine 5'-phosphate decarboxylase (239 aa).

Substrate contacts are provided by residues aspartate 15, lysine 37, 64 to 73 (DLKFHDIPNT), threonine 126, arginine 187, glutamine 196, glycine 216, and arginine 217. The active-site Proton donor is the lysine 66.

This sequence belongs to the OMP decarboxylase family. Type 1 subfamily. As to quaternary structure, homodimer.

It carries out the reaction orotidine 5'-phosphate + H(+) = UMP + CO2. It functions in the pathway pyrimidine metabolism; UMP biosynthesis via de novo pathway; UMP from orotate: step 2/2. Its function is as follows. Catalyzes the decarboxylation of orotidine 5'-monophosphate (OMP) to uridine 5'-monophosphate (UMP). The polypeptide is Orotidine 5'-phosphate decarboxylase (Geobacter metallireducens (strain ATCC 53774 / DSM 7210 / GS-15)).